The following is a 418-amino-acid chain: MIQLTATPVSALVDEPVHIRATGLIPFQMVSFQASLEDENGDMFYSQAHYRANEFGEVDLNHASSLGGDYMGVHPMGLFWSLKPEKLLTRLLKRDVMNRPFQVQVKLYDLELIVNNKVASAPKASLTLERWYVAPGVTRIKVREGRLRGALFLPPGEGLFPGVIDLFGGLGGLLEFRASLLASRGFASLALAYHNYEDLPRKPEVTDLEYFEEAANFLLRHPKVFGSGVGVVSVCQGVQIGLSMAIYLKQVTATVLINGTNFPFGIPQVYHGQIHQPLPHSAQLISTNALGLLELYRTFETTQVGASQYLFPIEEAQGQFLFIVGEGDKTINSKAHAEQAIGQLKRHGKNNWTLLSYPGAGHLIEPPYSPLCCASTTHDLRLHWGGEVIPHAAAQEHAWKEIQRFLRKHLIPDVTSQL.

Residue S125 is modified to Phosphoserine. Residues C235, D328, and H362 each act as charge relay system in the active site. A Phosphoserine modification is found at S416.

The protein belongs to the C/M/P thioester hydrolase family. In terms of assembly, monomer. Expressed in the gallbladder mucosa and pancreas. Expressed in hepatocytes (at protein level).

The protein resides in the cytoplasm. The protein localises to the cytosol. It localises to the peroxisome. It carries out the reaction choloyl-CoA + glycine = glycocholate + CoA + H(+). The catalysed reaction is hexadecanoyl-CoA + H2O = hexadecanoate + CoA + H(+). It catalyses the reaction choloyl-CoA + H2O = cholate + CoA + H(+). The enzyme catalyses chenodeoxycholoyl-CoA + H2O = chenodeoxycholate + CoA + H(+). It carries out the reaction eicosanoyl-CoA + H2O = eicosanoate + CoA + H(+). The catalysed reaction is octadecanoyl-CoA + H2O = octadecanoate + CoA + H(+). It catalyses the reaction docosanoyl-CoA + H2O = docosanoate + CoA + H(+). The enzyme catalyses tetracosanoyl-CoA + H2O = tetracosanoate + CoA + H(+). It carries out the reaction hexacosanoyl-CoA + H2O = hexacosanoate + CoA + H(+). The catalysed reaction is dodecanoyl-CoA + H2O = dodecanoate + CoA + H(+). It catalyses the reaction tetradecanoyl-CoA + H2O = tetradecanoate + CoA + H(+). The enzyme catalyses choloyl-CoA + taurine = taurocholate + CoA + H(+). It carries out the reaction chenodeoxycholoyl-CoA + glycine = glycochenodeoxycholate + CoA + H(+). The catalysed reaction is chenodeoxycholoyl-CoA + taurine = taurochenodeoxycholate + CoA + H(+). It catalyses the reaction eicosanoyl-CoA + glycine = N-eicosanoylglycinate + CoA + H(+). The enzyme catalyses hexacosanoyl-CoA + glycine = N-hexacosanoylglycine + CoA + H(+). It carries out the reaction docosanoyl-CoA + glycine = N-docosanoylglycine + CoA + H(+). Functionally, catalyzes the amidation of bile acids (BAs) with the amino acids taurine and glycine. More than 95% of the BAs are N-acyl amidates with glycine and taurine. Amidation of BAs in the liver with glycine or taurine prior to their excretion into bile is an important biochemical event in bile acid metabolism. This conjugation (or amidation) plays several important biological roles in that it promotes the secretion of BAs and cholesterol into bile and increases the detergent properties of BAs in the intestine, which facilitates lipid and vitamin absorption. May also act as an acyl-CoA thioesterase that regulates intracellular levels of free fatty acids. In vitro, catalyzes the hydrolysis of long- and very long-chain saturated acyl-CoAs to the free fatty acid and coenzyme A (CoASH), and conjugates glycine to these acyl-CoAs. The sequence is that of Bile acid-CoA:amino acid N-acyltransferase (BAAT) from Homo sapiens (Human).